The sequence spans 909 residues: DNA mismatch repair protein MutS (909 aa).

Position 614–621 (614–621 (GPNMAGKS)) interacts with ATP. Residues 798 to 827 (LEENSPQNNDISKESSSSSNSHDKLESSVI) form a disordered region. The segment covering 818–827 (SHDKLESSVI) has biased composition (basic and acidic residues).

Belongs to the DNA mismatch repair MutS family.

In terms of biological role, this protein is involved in the repair of mismatches in DNA. It is possible that it carries out the mismatch recognition step. This protein has a weak ATPase activity. The polypeptide is DNA mismatch repair protein MutS (Clostridium novyi (strain NT)).